A 199-amino-acid chain; its full sequence is Elongation factor Ts (199 aa).

Residues 81–84 are involved in Mg(2+) ion dislocation from EF-Tu; sequence TDFV.

It belongs to the EF-Ts family.

Its subcellular location is the cytoplasm. Functionally, associates with the EF-Tu.GDP complex and induces the exchange of GDP to GTP. It remains bound to the aminoacyl-tRNA.EF-Tu.GTP complex up to the GTP hydrolysis stage on the ribosome. The protein is Elongation factor Ts of Thermotoga petrophila (strain ATCC BAA-488 / DSM 13995 / JCM 10881 / RKU-1).